A 361-amino-acid polypeptide reads, in one-letter code: Ribosomal RNA large subunit methyltransferase M (361 aa).

S-adenosyl-L-methionine-binding positions include S193, 226–229 (CPGG), D245, D265, and D283. Residue K312 is the Proton acceptor of the active site.

The protein belongs to the class I-like SAM-binding methyltransferase superfamily. RNA methyltransferase RlmE family. RlmM subfamily. Monomer.

The protein resides in the cytoplasm. The catalysed reaction is cytidine(2498) in 23S rRNA + S-adenosyl-L-methionine = 2'-O-methylcytidine(2498) in 23S rRNA + S-adenosyl-L-homocysteine + H(+). Catalyzes the 2'-O-methylation at nucleotide C2498 in 23S rRNA. The protein is Ribosomal RNA large subunit methyltransferase M of Histophilus somni (strain 2336) (Haemophilus somnus).